The following is a 216-amino-acid chain: Glycerol-3-phosphate acyltransferase (216 aa).

5 consecutive transmembrane segments (helical) span residues Leu-11–Val-31, Leu-62–Ser-82, Val-95–Leu-115, Ala-132–Phe-152, and Leu-171–Ile-191.

Belongs to the PlsY family. Probably interacts with PlsX.

The protein localises to the cell inner membrane. The catalysed reaction is an acyl phosphate + sn-glycerol 3-phosphate = a 1-acyl-sn-glycero-3-phosphate + phosphate. It functions in the pathway lipid metabolism; phospholipid metabolism. Its function is as follows. Catalyzes the transfer of an acyl group from acyl-phosphate (acyl-PO(4)) to glycerol-3-phosphate (G3P) to form lysophosphatidic acid (LPA). This enzyme utilizes acyl-phosphate as fatty acyl donor, but not acyl-CoA or acyl-ACP. This Rhodospirillum rubrum (strain ATCC 11170 / ATH 1.1.1 / DSM 467 / LMG 4362 / NCIMB 8255 / S1) protein is Glycerol-3-phosphate acyltransferase.